Here is a 116-residue protein sequence, read N- to C-terminus: Large ribosomal subunit protein bL17 (116 aa).

It belongs to the bacterial ribosomal protein bL17 family. As to quaternary structure, part of the 50S ribosomal subunit. Contacts protein L32.

In Parasynechococcus marenigrum (strain WH8102), this protein is Large ribosomal subunit protein bL17.